The following is a 193-amino-acid chain: dTTP/UTP pyrophosphatase (193 aa).

The Proton acceptor role is filled by D77.

This sequence belongs to the Maf family. YhdE subfamily. A divalent metal cation is required as a cofactor.

It localises to the cytoplasm. The enzyme catalyses dTTP + H2O = dTMP + diphosphate + H(+). It catalyses the reaction UTP + H2O = UMP + diphosphate + H(+). Its function is as follows. Nucleoside triphosphate pyrophosphatase that hydrolyzes dTTP and UTP. May have a dual role in cell division arrest and in preventing the incorporation of modified nucleotides into cellular nucleic acids. The protein is dTTP/UTP pyrophosphatase of Phocaeicola vulgatus (strain ATCC 8482 / DSM 1447 / JCM 5826 / CCUG 4940 / NBRC 14291 / NCTC 11154) (Bacteroides vulgatus).